A 229-amino-acid polypeptide reads, in one-letter code: Probable coenzyme A transferase subunit alpha (229 aa).

26–32 lines the CoA pocket; it reads GGFGGVG.

It belongs to the 3-oxoacid CoA-transferase subunit A family. Heterodimer of a subunit alpha and a subunit beta.

This Bacillus subtilis (strain 168) protein is Probable coenzyme A transferase subunit alpha (yodS).